A 310-amino-acid chain; its full sequence is Ribosomal RNA small subunit methyltransferase H (310 aa).

S-adenosyl-L-methionine-binding positions include 33-35, D53, F79, D100, and Q107; that span reads AGH.

It belongs to the methyltransferase superfamily. RsmH family.

It localises to the cytoplasm. The catalysed reaction is cytidine(1402) in 16S rRNA + S-adenosyl-L-methionine = N(4)-methylcytidine(1402) in 16S rRNA + S-adenosyl-L-homocysteine + H(+). Its function is as follows. Specifically methylates the N4 position of cytidine in position 1402 (C1402) of 16S rRNA. The sequence is that of Ribosomal RNA small subunit methyltransferase H from Clostridium tetani (strain Massachusetts / E88).